Here is a 399-residue protein sequence, read N- to C-terminus: Beta-1,6-galactosyltransferase GALT31A (399 aa).

Over 1-12 (MGMGRYQKSATS) the chain is Cytoplasmic. Residues 13-35 (GVSARWVFVLCISSFLLGVLVVN) traverse the membrane as a helical; Signal-anchor for type II membrane protein segment. Residues 36–399 (RLLASFETVD…GDGAIWHSSF (364 aa)) lie on the Lumenal side of the membrane.

It belongs to the glycosyltransferase 31 family. In terms of assembly, interacts with GALT29A. Mn(2+) serves as cofactor.

The protein localises to the golgi apparatus membrane. The protein operates within protein modification; protein glycosylation. Its function is as follows. Beta-galactosyltransferase involved in elongation of beta-1,6-linked galactan side chains on arabinogalactan proteins. Required for the progression of embryogenesis beyond the globular stage. Beta-galactosyltransferase involved in the biosynthesis of type II arabinogalactan. Transfers galactose from UDP-galactose to a mixture of various oligosaccharides derived from arabinogalactan proteins. Forms a complex with GALT29A that can work cooperatively to enhance the activities of adding galactose residues at O6 positions to beta-1,6-linked galactan and beta-1,3-linked galactan. The protein is Beta-1,6-galactosyltransferase GALT31A of Arabidopsis thaliana (Mouse-ear cress).